The following is a 241-amino-acid chain: Xyloglucan-specific endo-beta-1,4-glucanase A (241 aa).

The first 16 residues, 1–16 (MKVLALSALLSLASAA), serve as a signal peptide directing secretion. Asn47 carries N-linked (GlcNAc...) asparagine glycosylation.

It belongs to the glycosyl hydrolase 12 (cellulase H) family.

It is found in the secreted. The enzyme catalyses xyloglucan + H2O = xyloglucan oligosaccharides.. In terms of biological role, catalyzes endohydrolysis of 1,4-beta-D-glucosidic linkages in xyloglucan with retention of the beta-configuration of the glycosyl residues. Specific for xyloglucan and does not hydrolyze other cell wall components. The chain is Xyloglucan-specific endo-beta-1,4-glucanase A (xgeA) from Aspergillus niger.